We begin with the raw amino-acid sequence, 127 residues long: Protein SPIRAL1-like 4 (127 aa).

Positions 1 to 127 are disordered; it reads MGKARGVNSG…FGSGPCGSDK (127 aa). A compositionally biased stretch (low complexity) spans 39-48; the sequence is TTTTTTTTTT. At S80 the chain carries Phosphoserine. Over residues 80 to 94 the composition is skewed to polar residues; sequence SPNNYYRSDGQNCGN.

Belongs to the SPIRAL1 family. In terms of tissue distribution, ubiquitous.

Functionally, acts redundantly with SPR1 in maintaining the cortical microtubules organization essential for anisotropic cell growth. The polypeptide is Protein SPIRAL1-like 4 (SP1L4) (Arabidopsis thaliana (Mouse-ear cress)).